A 368-amino-acid polypeptide reads, in one-letter code: Probable auxin efflux carrier component 5b (368 aa).

10 consecutive transmembrane segments (helical) span residues 7 to 27, 39 to 59, 71 to 91, 114 to 134, 145 to 165, 227 to 247, 251 to 271, 286 to 306, 312 to 332, and 347 to 367; these read VYKVVAAMAPLYFALGLGYGS, CDAVNRLVACFAVPFFAFDFA, VLAADALSKLAVALALAACAA, CITGFSLATLNNTLVVGVPLL, LIVQISVVQTIVYFPLLLLAF, VLGVAWACVTNRWHVETPSII, VLIMSKTGVGLSMFSMGLFMA, LGMALRFVAGPAATAVGAFAL, LLRLAIIQAALPQSITTFVFA, and IFGTLASLPVLIVYYIVLGFI.

It belongs to the auxin efflux carrier (TC 2.A.69.1) family. As to expression, expressed at low levels in roots and shoot apex.

It is found in the membrane. May act as a component of the auxin efflux carrier. The protein is Probable auxin efflux carrier component 5b of Oryza sativa subsp. japonica (Rice).